Here is a 283-residue protein sequence, read N- to C-terminus: Bifunctional protein FolD 1 (283 aa).

NADP(+)-binding positions include Gly-166–Ser-168 and Ile-232.

Belongs to the tetrahydrofolate dehydrogenase/cyclohydrolase family. As to quaternary structure, homodimer.

The catalysed reaction is (6R)-5,10-methylene-5,6,7,8-tetrahydrofolate + NADP(+) = (6R)-5,10-methenyltetrahydrofolate + NADPH. It carries out the reaction (6R)-5,10-methenyltetrahydrofolate + H2O = (6R)-10-formyltetrahydrofolate + H(+). It functions in the pathway one-carbon metabolism; tetrahydrofolate interconversion. In terms of biological role, catalyzes the oxidation of 5,10-methylenetetrahydrofolate to 5,10-methenyltetrahydrofolate and then the hydrolysis of 5,10-methenyltetrahydrofolate to 10-formyltetrahydrofolate. This chain is Bifunctional protein FolD 1, found in Lactobacillus johnsonii (strain CNCM I-12250 / La1 / NCC 533).